The chain runs to 258 residues: Indole-3-glycerol phosphate synthase (258 aa).

Belongs to the TrpC family.

It catalyses the reaction 1-(2-carboxyphenylamino)-1-deoxy-D-ribulose 5-phosphate + H(+) = (1S,2R)-1-C-(indol-3-yl)glycerol 3-phosphate + CO2 + H2O. The protein operates within amino-acid biosynthesis; L-tryptophan biosynthesis; L-tryptophan from chorismate: step 4/5. The protein is Indole-3-glycerol phosphate synthase of Campylobacter jejuni subsp. doylei (strain ATCC BAA-1458 / RM4099 / 269.97).